The primary structure comprises 123 residues: Small ribosomal subunit protein uS13 (123 aa).

The interval 92–123 (HRRGLPVRGQKTKTNARTRKGPKKLVVSRKKK) is disordered.

It belongs to the universal ribosomal protein uS13 family. In terms of assembly, part of the 30S ribosomal subunit. Forms a loose heterodimer with protein S19. Forms two bridges to the 50S subunit in the 70S ribosome.

In terms of biological role, located at the top of the head of the 30S subunit, it contacts several helices of the 16S rRNA. In the 70S ribosome it contacts the 23S rRNA (bridge B1a) and protein L5 of the 50S subunit (bridge B1b), connecting the 2 subunits; these bridges are implicated in subunit movement. Contacts the tRNAs in the A and P-sites. The protein is Small ribosomal subunit protein uS13 of Clostridium tetani (strain Massachusetts / E88).